Reading from the N-terminus, the 469-residue chain is Calcium-binding mitochondrial carrier protein SCaMC-2-A (469 aa).

Topologically, residues 1 to 189 are mitochondrial intermembrane; that stretch reads MLCLCLYVPV…EHLTGMWWRH (189 aa). 3 EF-hand domains span residues 47–80, 78–113, and 114–149; these read TYRR…QDHE, DHEK…LGVH, and ISLK…QPAE. Ca(2+) contacts are provided by Asp-64, Gln-66, and Glu-71. Solcar repeat units lie at residues 184 to 270, 278 to 363, and 375 to 463; these read GMWW…IKRV, LGIS…LKNT, and PGVF…IKST. Residues 190–207 traverse the membrane as a helical segment; that stretch reads LVSGGGAGAVSRTCTAPL. Residues 208–244 are Mitochondrial matrix-facing; the sequence is DRLKVLMQVHGCQGKSMCLMSGLTQMIKEGGVRSLWR. Residues 245 to 264 form a helical membrane-spanning segment; that stretch reads GNGINVIKIAPETALKFMAY. Residues 265–287 are Mitochondrial intermembrane-facing; the sequence is EQIKRVMGSSQETLGISERFVAG. A helical membrane pass occupies residues 288–301; that stretch reads SLAGVIAQSTIYPM. Residues 302–337 are Mitochondrial matrix-facing; that stretch reads EVLKTRLALRKTGQYKGISDCAKHILKTEGMSAFYK. A helical transmembrane segment spans residues 338-357; it reads GYVPNMLGIIPYAGIDLAVY. Over 358–380 the chain is Mitochondrial intermembrane; the sequence is ETLKNTWLQRYGTENADPGVFVL. A helical transmembrane segment spans residues 381-398; sequence LACGTVSSTCGQLASYPL. The Mitochondrial matrix segment spans residues 399 to 437; sequence ALIRTRMQAQASVEGSSQVSMTGLFKQIMKTEGPTGLYR. A helical membrane pass occupies residues 438–457; the sequence is GLTPNFLKVIPAVSISYVVY. At 458 to 469 the chain is on the mitochondrial intermembrane side; the sequence is EHIKSTLGVRSR.

This sequence belongs to the mitochondrial carrier (TC 2.A.29) family.

Its subcellular location is the mitochondrion inner membrane. Its function is as follows. Calcium-dependent mitochondrial solute carrier. The chain is Calcium-binding mitochondrial carrier protein SCaMC-2-A (slc25a25a) from Danio rerio (Zebrafish).